The primary structure comprises 616 residues: MGNDKTNMFVAIALSLVVLLGWHYFVTGPASERQRQAAQSQTAQTGAPQTADGIPSPSPREGGPNAPAPGTLPGAAAQGPVSREDALARSARVRIDTPALYGSIGLKGARIDDVSLKNYHETVSDESPRIVLLSPTGTANPYYAEFGWVGANAGPLPNADTLWKADGDLLAPGRPLTLTWDNGQGLVFKRIVAVDDKFMFTVRDEVENTSANPVTLYPYSLVSRWGKPQTQGYYVLHEGLIGVLGGDGLQEYTYDKVGKEPAYGGAATQGKAWTNVTGGWVGITDKYWAAAAIPEQDKPFTGAFTERTDGATKIYQTSVRGDAVTLAPNASSVTTQRLFAGAKEVNQINAYEREFGIKQFDLMIDWGWFWFLTKPMFRALDFFFHLLGNFGVSILLVTLILKLFFLPIANRSYVSMAKMKAVQPEMTSIRERYKDDRVKQQQAMMELYKKEKINPVAGCWPVLIQIPVFFALYKVLFITIEMRHAPFFGWIQDLAAPDPTSIVNLFGLLPFTPPEYIPIHLGVWPIIMGITMFIQMKMNPAPPDPVQAQVFAFMPIVFTFMLGSFPAGLVIYWAWNNTLSVIQQYVIMRRNGVKVELWDNLRGMFKRGNKSAAAKG.

The chain crosses the membrane as a helical span at residues 8-28 (MFVAIALSLVVLLGWHYFVTG). The interval 33-85 (RQRQAAQSQTAQTGAPQTADGIPSPSPREGGPNAPAPGTLPGAAAQGPVSRED) is disordered. Composition is skewed to low complexity over residues 36 to 51 (QAAQSQTAQTGAPQTA) and 62 to 80 (GGPNAPAPGTLPGAAAQGP). The next 4 helical transmembrane spans lie at 386–406 (LLGNFGVSILLVTLILKLFFL), 460–480 (WPVLIQIPVFFALYKVLFITI), 516–536 (YIPIHLGVWPIIMGITMFIQM), and 551–571 (FAFMPIVFTFMLGSFPAGLVI).

Belongs to the OXA1/ALB3/YidC family. Type 1 subfamily. Interacts with the Sec translocase complex via SecD. Specifically interacts with transmembrane segments of nascent integral membrane proteins during membrane integration.

The protein resides in the cell inner membrane. Required for the insertion and/or proper folding and/or complex formation of integral membrane proteins into the membrane. Involved in integration of membrane proteins that insert both dependently and independently of the Sec translocase complex, as well as at least some lipoproteins. Aids folding of multispanning membrane proteins. The protein is Membrane protein insertase YidC of Methylorubrum extorquens (strain PA1) (Methylobacterium extorquens).